A 180-amino-acid polypeptide reads, in one-letter code: Major urinary protein 17 (180 aa).

An N-terminal signal peptide occupies residues 1 to 18 (MKMLLLLCLGLTLVCVHA). C82 and C175 are joined by a disulfide.

The protein belongs to the calycin superfamily. Lipocalin family. Because of their involvement in the coordination of social behavior, Mup proteins are thought to exhibit variable expression depending upon gender, age and status of the studied individuals. Expression may also be strain-specific: in strains C57BL/6J and 129S7, transcriptional support is lacking for Mup17.

It localises to the secreted. Major urinary proteins (Mups) bind pheromones, thus stabilize them and allow slow release into the air from urine marks. May protect pheromones from oxidation. May also act as pheromones themselves. In this context, they play a role in the regulation of social behaviors, such as aggression, mating, pup-suckling, territory establishment and dominance. This chain is Major urinary protein 17 (Mup17), found in Mus musculus (Mouse).